Here is a 209-residue protein sequence, read N- to C-terminus: Uracil phosphoribosyltransferase (209 aa).

Residues Arg-79, Arg-104, and 131–139 (DPMLATGNS) each bind 5-phospho-alpha-D-ribose 1-diphosphate. Residues Ile-194 and 199–201 (GDA) each bind uracil. Asp-200 is a 5-phospho-alpha-D-ribose 1-diphosphate binding site.

The protein belongs to the UPRTase family. It depends on Mg(2+) as a cofactor.

The catalysed reaction is UMP + diphosphate = 5-phospho-alpha-D-ribose 1-diphosphate + uracil. It participates in pyrimidine metabolism; UMP biosynthesis via salvage pathway; UMP from uracil: step 1/1. With respect to regulation, allosterically activated by GTP. In terms of biological role, catalyzes the conversion of uracil and 5-phospho-alpha-D-ribose 1-diphosphate (PRPP) to UMP and diphosphate. The polypeptide is Uracil phosphoribosyltransferase (Sinorhizobium medicae (strain WSM419) (Ensifer medicae)).